The following is a 271-amino-acid chain: MSAAADVPRRVTIHDLQLRKRQHRRWAMLTCYDALTARIFEEAGIDVLLVGDSAANTVLGYPDTLGVDVDELLILNRAVARAAQRALVVADLPFGSYQISPRQALQTAIRFVKRAGVQAVKFEGGRRVAEHVRTVVEAGIPVMAHIGFTPQSVHALGGYRVQGRGDDAAAIRDDALALQEAGAFAIVLELVPAGLAAELTAALQIPTIGIGAGPDCDAQVLVWTDMAGLTPQPTPKFVKRYADLRTVLHDAARAFAADVADGRYPDAAHSY.

Residues Asp52 and Asp91 each contribute to the Mg(2+) site. Residues 52 to 53, Asp91, and Lys121 each bind 3-methyl-2-oxobutanoate; that span reads DS. Residue Glu123 coordinates Mg(2+). The active-site Proton acceptor is the Glu189.

The protein belongs to the PanB family. As to quaternary structure, homodecamer; pentamer of dimers. Requires Mg(2+) as cofactor.

It is found in the cytoplasm. It carries out the reaction 3-methyl-2-oxobutanoate + (6R)-5,10-methylene-5,6,7,8-tetrahydrofolate + H2O = 2-dehydropantoate + (6S)-5,6,7,8-tetrahydrofolate. The protein operates within cofactor biosynthesis; (R)-pantothenate biosynthesis; (R)-pantoate from 3-methyl-2-oxobutanoate: step 1/2. Functionally, catalyzes the reversible reaction in which hydroxymethyl group from 5,10-methylenetetrahydrofolate is transferred onto alpha-ketoisovalerate to form ketopantoate. This is 3-methyl-2-oxobutanoate hydroxymethyltransferase from Acidothermus cellulolyticus (strain ATCC 43068 / DSM 8971 / 11B).